The sequence spans 194 residues: Peptidyl-tRNA hydrolase (194 aa).

Tyr17 contacts tRNA. The active-site Proton acceptor is His22. Tyr68, Asn70, and Asn116 together coordinate tRNA.

The protein belongs to the PTH family. Monomer.

The protein resides in the cytoplasm. It carries out the reaction an N-acyl-L-alpha-aminoacyl-tRNA + H2O = an N-acyl-L-amino acid + a tRNA + H(+). Hydrolyzes ribosome-free peptidyl-tRNAs (with 1 or more amino acids incorporated), which drop off the ribosome during protein synthesis, or as a result of ribosome stalling. In terms of biological role, catalyzes the release of premature peptidyl moieties from peptidyl-tRNA molecules trapped in stalled 50S ribosomal subunits, and thus maintains levels of free tRNAs and 50S ribosomes. This is Peptidyl-tRNA hydrolase from Marinomonas sp. (strain MWYL1).